Reading from the N-terminus, the 302-residue chain is Alpha-N-acetyl-neuraminyl-2,3-beta-galactosyl-1,3-N-acetyl-galactosaminide alpha-2,6-sialyltransferase (302 aa).

Residues 1 to 6 (MKAPGR) are Cytoplasmic-facing. Residues 7–27 (LVLIILCSVVFSAVYILLCCW) traverse the membrane as a helical; Signal-anchor for type II membrane protein segment. Topologically, residues 28-302 (AGLPLCLATC…VFAHPSWRTE (275 aa)) are lumenal. Cysteine 76 and cysteine 225 are disulfide-bonded. Residue asparagine 135 is glycosylated (N-linked (GlcNAc...) asparagine).

The protein belongs to the glycosyltransferase 29 family. As to expression, ubiquitous.

It is found in the golgi apparatus membrane. The enzyme catalyses an alpha-Neu5Ac-(2-&gt;3)-beta-D-Gal-(1-&gt;3)-D-GlcNAc derivative + CMP-N-acetyl-beta-neuraminate = an alpha-Neu5Ac-(2-&gt;3)-beta-D-Gal-(1-&gt;3)-[alpha-Neu5Ac-(2-&gt;6)]-D-GlcNAc derivative + CMP + H(+). The catalysed reaction is N-acetyl-alpha-neuraminosyl-(2-&gt;3)-beta-D-galactosyl-(1-&gt;3)-N-acetyl-D-galactosamine + CMP-N-acetyl-beta-neuraminate = N-acetyl-alpha-neuraminosyl-(2-&gt;3)-beta-D-galactosyl-(1-&gt;3)-[N-acetyl-alpha-neuraminosyl-(2-&gt;6)]-N-acetyl-D-galactosamine + CMP + H(+). It catalyses the reaction a ganglioside GM1b (d18:1(4E)) + CMP-N-acetyl-beta-neuraminate = a ganglioside GD1alpha (d18:1(4E)) + CMP + H(+). It carries out the reaction 3-O-[alpha-Neu5Ac-(2-&gt;3)-beta-D-Gal-(1-&gt;3)-alpha-D-GalNAc]-L-Ser-[protein] + CMP-N-acetyl-beta-neuraminate = a 3-O-{alpha-Neu5Ac-(2-&gt;3)-beta-D-Gal-(1-&gt;3)-[alpha-Neu5Ac-(2-&gt;6)]-alpha-D-GalNAc}-L-seryl-[protein] + CMP + H(+). The enzyme catalyses 3-O-[alpha-Neu5Ac-(2-&gt;3)-beta-D-Gal-(1-&gt;3)-alpha-D-GalNAc]-L-Thr-[protein] + CMP-N-acetyl-beta-neuraminate = a 3-O-{alpha-Neu5Ac-(2-&gt;3)-beta-D-Gal-(1-&gt;3)-[alpha-Neu5Ac-(2-&gt;6)]-alpha-D-GalNAc}-L-threonyl-[protein] + CMP + H(+). The protein operates within protein modification; protein glycosylation. It functions in the pathway glycolipid biosynthesis. In terms of biological role, transfers the sialyl group (N-acetyl-alpha-neuraminyl or NeuAc) from CMP-NeuAc to the GalNAc residue on the NeuAc-alpha-2,3-Gal-beta-1,3-GalNAc sequence of glycoproteins and glycolipids forming an alpha-2,6-linkage. Produces branched type disialyl structures by transfer of a sialyl group onto a GalNAc residue inside the backbone core chains. Prefers O-glycans to glycoproteins or glycolipids. The polypeptide is Alpha-N-acetyl-neuraminyl-2,3-beta-galactosyl-1,3-N-acetyl-galactosaminide alpha-2,6-sialyltransferase (ST6GALNAC4) (Homo sapiens (Human)).